A 426-amino-acid polypeptide reads, in one-letter code: Histidine--tRNA ligase (426 aa).

It belongs to the class-II aminoacyl-tRNA synthetase family. In terms of assembly, homodimer.

Its subcellular location is the cytoplasm. The catalysed reaction is tRNA(His) + L-histidine + ATP = L-histidyl-tRNA(His) + AMP + diphosphate + H(+). This is Histidine--tRNA ligase from Streptococcus pyogenes serotype M3 (strain ATCC BAA-595 / MGAS315).